Here is a 413-residue protein sequence, read N- to C-terminus: S-adenosylmethionine synthase (413 aa).

ATP is bound at residue His15. Asp17 is a binding site for Mg(2+). Glu43 contributes to the K(+) binding site. 2 residues coordinate L-methionine: Glu56 and Gln100. The flexible loop stretch occupies residues 100–110 (QSPDISQGVNE). Residues 171–173 (DGK), 248–249 (KF), Asp257, 263–264 (RK), Ala280, and Lys284 each bind ATP. Asp257 contributes to the L-methionine binding site. An L-methionine-binding site is contributed by Lys288.

This sequence belongs to the AdoMet synthase family. Homotetramer; dimer of dimers. Mg(2+) serves as cofactor. The cofactor is K(+).

It localises to the cytoplasm. The catalysed reaction is L-methionine + ATP + H2O = S-adenosyl-L-methionine + phosphate + diphosphate. It functions in the pathway amino-acid biosynthesis; S-adenosyl-L-methionine biosynthesis; S-adenosyl-L-methionine from L-methionine: step 1/1. Catalyzes the formation of S-adenosylmethionine (AdoMet) from methionine and ATP. The overall synthetic reaction is composed of two sequential steps, AdoMet formation and the subsequent tripolyphosphate hydrolysis which occurs prior to release of AdoMet from the enzyme. This Prochlorococcus marinus (strain MIT 9515) protein is S-adenosylmethionine synthase.